Consider the following 264-residue polypeptide: 3-methyl-2-oxobutanoate hydroxymethyltransferase (264 aa).

Positions 45 and 84 each coordinate Mg(2+). 3-methyl-2-oxobutanoate contacts are provided by residues 45 to 46, Asp-84, and Lys-113; that span reads DS. Glu-115 is a binding site for Mg(2+). Residue Glu-182 is the Proton acceptor of the active site.

This sequence belongs to the PanB family. In terms of assembly, homodecamer; pentamer of dimers. Mg(2+) serves as cofactor.

Its subcellular location is the cytoplasm. It carries out the reaction 3-methyl-2-oxobutanoate + (6R)-5,10-methylene-5,6,7,8-tetrahydrofolate + H2O = 2-dehydropantoate + (6S)-5,6,7,8-tetrahydrofolate. Its pathway is cofactor biosynthesis; (R)-pantothenate biosynthesis; (R)-pantoate from 3-methyl-2-oxobutanoate: step 1/2. Functionally, catalyzes the reversible reaction in which hydroxymethyl group from 5,10-methylenetetrahydrofolate is transferred onto alpha-ketoisovalerate to form ketopantoate. The sequence is that of 3-methyl-2-oxobutanoate hydroxymethyltransferase from Caldicellulosiruptor bescii (strain ATCC BAA-1888 / DSM 6725 / KCTC 15123 / Z-1320) (Anaerocellum thermophilum).